A 317-amino-acid chain; its full sequence is Glycine--tRNA ligase alpha subunit (317 aa).

It belongs to the class-II aminoacyl-tRNA synthetase family. Tetramer of two alpha and two beta subunits.

The protein localises to the cytoplasm. The enzyme catalyses tRNA(Gly) + glycine + ATP = glycyl-tRNA(Gly) + AMP + diphosphate. This is Glycine--tRNA ligase alpha subunit from Acidovorax ebreus (strain TPSY) (Diaphorobacter sp. (strain TPSY)).